We begin with the raw amino-acid sequence, 110 residues long: Insulin (110 aa).

The N-terminal stretch at M1–A24 is a signal peptide. 3 cysteine pairs are disulfide-bonded: C31/C96, C43/C109, and C95/C100. Positions E57–Q87 are cleaved as a propeptide — c peptide.

Belongs to the insulin family. In terms of assembly, heterodimer of a B chain and an A chain linked by two disulfide bonds.

The protein resides in the secreted. Its function is as follows. Insulin decreases blood glucose concentration. It increases cell permeability to monosaccharides, amino acids and fatty acids. It accelerates glycolysis, the pentose phosphate cycle, and glycogen synthesis in liver. The protein is Insulin (INS) of Pan troglodytes (Chimpanzee).